Consider the following 413-residue polypeptide: Arginine biosynthesis bifunctional protein ArgJ (413 aa).

Residues Thr-163, Lys-189, Thr-200, Glu-286, Asn-408, and Thr-413 each contribute to the substrate site. Catalysis depends on Thr-200, which acts as the Nucleophile.

It belongs to the ArgJ family. As to quaternary structure, heterotetramer of two alpha and two beta chains.

It localises to the cytoplasm. It catalyses the reaction N(2)-acetyl-L-ornithine + L-glutamate = N-acetyl-L-glutamate + L-ornithine. The enzyme catalyses L-glutamate + acetyl-CoA = N-acetyl-L-glutamate + CoA + H(+). It participates in amino-acid biosynthesis; L-arginine biosynthesis; L-ornithine and N-acetyl-L-glutamate from L-glutamate and N(2)-acetyl-L-ornithine (cyclic): step 1/1. Its pathway is amino-acid biosynthesis; L-arginine biosynthesis; N(2)-acetyl-L-ornithine from L-glutamate: step 1/4. Catalyzes two activities which are involved in the cyclic version of arginine biosynthesis: the synthesis of N-acetylglutamate from glutamate and acetyl-CoA as the acetyl donor, and of ornithine by transacetylation between N(2)-acetylornithine and glutamate. The polypeptide is Arginine biosynthesis bifunctional protein ArgJ (Staphylococcus aureus (strain Mu50 / ATCC 700699)).